Here is a 252-residue protein sequence, read N- to C-terminus: Small ribosomal subunit protein uS2 (252 aa).

This sequence belongs to the universal ribosomal protein uS2 family.

This is Small ribosomal subunit protein uS2 from Alcanivorax borkumensis (strain ATCC 700651 / DSM 11573 / NCIMB 13689 / SK2).